Consider the following 358-residue polypeptide: Feruloyl esterase B (358 aa).

The N-terminal stretch at 1–18 is a signal peptide; sequence MAIPLVLLLAWLLPTVFA. Residues 19–291 are catalytic; that stretch reads ASLTQVSNFG…VSVVLDWFGI (273 aa). The active-site Charge relay system is the serine 136. Asparagine 179 and asparagine 246 each carry an N-linked (GlcNAc...) asparagine glycan. Residues 292–321 are gly/Thr-rich linker; the sequence is TGGGGGNGGGSGSTTTTTSATTTSTGPTGG. Positions 297-318 are disordered; sequence GNGGGSGSTTTTTSATTTSTGP. Residues 304–318 are compositionally biased toward low complexity; that stretch reads STTTTTSATTTSTGP. In terms of domain architecture, CBM1 spans 322–358; the sequence is CTAAHWDQCGGNGYTGCTSCASPYTCQKVNDYYSQCL.

Belongs to the carbohydrate esterase 1 (CE1) family. Feruloyl esterase type B subfamily.

Its subcellular location is the secreted. It catalyses the reaction feruloyl-polysaccharide + H2O = ferulate + polysaccharide.. Its function is as follows. Involved in degradation of plant cell walls. Hydrolyzes the feruloyl-arabinose ester bond in arabinoxylans as well as the feruloyl-galactose and feruloyl-arabinose ester bonds in pectin. Active against methyl esters of caffeate (MCA), but not sinapate (MSA). The sequence is that of Feruloyl esterase B (faeB) from Talaromyces stipitatus (strain ATCC 10500 / CBS 375.48 / QM 6759 / NRRL 1006) (Penicillium stipitatum).